We begin with the raw amino-acid sequence, 522 residues long: Na(+)/H(+) antiporter NhaB (522 aa).

9 consecutive transmembrane segments (helical) span residues 13-33 (FLGN…IINP), 98-118 (LLLV…LFVF), 140-160 (AFLS…SVSV), 239-259 (FFIR…LVCL), 304-324 (AIIG…LVGL), 356-376 (LTVF…TPII), 390-410 (LFYL…VGTV), 446-466 (ATPN…APLI), and 477-497 (ALPY…FLLV).

This sequence belongs to the NhaB Na(+)/H(+) (TC 2.A.34) antiporter family.

It is found in the cell inner membrane. The enzyme catalyses 2 Na(+)(in) + 3 H(+)(out) = 2 Na(+)(out) + 3 H(+)(in). Functionally, na(+)/H(+) antiporter that extrudes sodium in exchange for external protons. The sequence is that of Na(+)/H(+) antiporter NhaB from Yersinia pestis bv. Antiqua (strain Angola).